The sequence spans 173 residues: Ribosome maturation factor RimM (173 aa).

Residues valine 94 to phenylalanine 166 enclose the PRC barrel domain.

The protein belongs to the RimM family. Binds ribosomal protein uS19.

It localises to the cytoplasm. Functionally, an accessory protein needed during the final step in the assembly of 30S ribosomal subunit, possibly for assembly of the head region. Essential for efficient processing of 16S rRNA. May be needed both before and after RbfA during the maturation of 16S rRNA. It has affinity for free ribosomal 30S subunits but not for 70S ribosomes. This Amoebophilus asiaticus (strain 5a2) protein is Ribosome maturation factor RimM.